The chain runs to 756 residues: NUT family member 2F (756 aa).

Disordered stretches follow at residues 173–200 (GNARPWPQGAHGEGSLAPSQAKARPDDS), 293–438 (IQKS…TSDP), 511–639 (RAAP…LPGM), and 653–756 (RLSQ…HCSQ). A compositionally biased stretch (pro residues) spans 304–321 (SLPPPAPPRLEPRGPPAP). Residues 417-427 (EGQREKGKVEQ) are compositionally biased toward basic and acidic residues. Residues 543 to 560 (QRVSVETSPPQTAAQDPQ) show a composition bias toward polar residues. The segment covering 654-665 (LSQSPVPSSGLL) has biased composition (low complexity). A compositionally biased stretch (basic residues) spans 746–756 (SRRKKKRHCSQ).

This sequence belongs to the NUT family.

The sequence is that of NUT family member 2F (NUTM2F) from Homo sapiens (Human).